Here is a 425-residue protein sequence, read N- to C-terminus: Ribonuclease T2-like (425 aa).

Residues 1–18 (MLLNKGLLASLLAYTTTA) form the signal peptide. Disulfide bonds link cysteine 32–cysteine 51, cysteine 40–cysteine 99, cysteine 50–cysteine 175, cysteine 107–cysteine 167, and cysteine 245–cysteine 281. The N-linked (GlcNAc...) asparagine glycan is linked to asparagine 42. The active site involves histidine 92. Asparagine 134 is a glycosylation site (N-linked (GlcNAc...) asparagine). Catalysis depends on residues glutamate 160 and histidine 164.

The protein belongs to the RNase T2 family.

Its subcellular location is the vacuole lumen. The protein resides in the cytoplasm. The catalysed reaction is a ribonucleotidyl-ribonucleotide-RNA + H2O = a 3'-end 3'-phospho-ribonucleotide-RNA + a 5'-end dephospho-ribonucleoside-RNA + H(+). In terms of biological role, rnase which modulates cell survival under stress conditions. Released from the vacuole to the cytoplasm during stress to promote tRNA and rRNA cleavage and to activate separately a downstream pathway that promotes cell death. Involved in cell size, vacuolar morphology and growth at high temperatures and high salt concentration. This chain is Ribonuclease T2-like (RNY1), found in Kluyveromyces lactis (strain ATCC 8585 / CBS 2359 / DSM 70799 / NBRC 1267 / NRRL Y-1140 / WM37) (Yeast).